We begin with the raw amino-acid sequence, 432 residues long: Adenylosuccinate lyase (432 aa).

N(6)-(1,2-dicarboxyethyl)-AMP-binding positions include 4-5 (RY), 67-69 (RHD), and 93-94 (TS). Residue His141 is the Proton donor/acceptor of the active site. Residue Gln212 coordinates N(6)-(1,2-dicarboxyethyl)-AMP. Ser262 functions as the Proton donor/acceptor in the catalytic mechanism. N(6)-(1,2-dicarboxyethyl)-AMP is bound by residues Ser263, 268-270 (KRN), Asn276, and 307-311 (SAERI).

Belongs to the lyase 1 family. Adenylosuccinate lyase subfamily. In terms of assembly, homodimer and homotetramer. Residues from neighboring subunits contribute catalytic and substrate-binding residues to each active site.

It catalyses the reaction N(6)-(1,2-dicarboxyethyl)-AMP = fumarate + AMP. It carries out the reaction (2S)-2-[5-amino-1-(5-phospho-beta-D-ribosyl)imidazole-4-carboxamido]succinate = 5-amino-1-(5-phospho-beta-D-ribosyl)imidazole-4-carboxamide + fumarate. It functions in the pathway purine metabolism; AMP biosynthesis via de novo pathway; AMP from IMP: step 2/2. Its pathway is purine metabolism; IMP biosynthesis via de novo pathway; 5-amino-1-(5-phospho-D-ribosyl)imidazole-4-carboxamide from 5-amino-1-(5-phospho-D-ribosyl)imidazole-4-carboxylate: step 2/2. In terms of biological role, catalyzes two reactions in de novo purine nucleotide biosynthesis. Catalyzes the breakdown of 5-aminoimidazole- (N-succinylocarboxamide) ribotide (SAICAR or 2-[5-amino-1-(5-phospho-beta-D-ribosyl)imidazole-4-carboxamido]succinate) to 5-aminoimidazole-4-carboxamide ribotide (AICAR or 5-amino-1-(5-phospho-beta-D-ribosyl)imidazole-4-carboxamide) and fumarate, and of adenylosuccinate (ADS or N(6)-(1,2-dicarboxyethyl)-AMP) to adenosine monophosphate (AMP) and fumarate. The sequence is that of Adenylosuccinate lyase (purB) from Streptococcus mutans serotype c (strain ATCC 700610 / UA159).